The chain runs to 347 residues: Large ribosomal subunit protein uL10 (347 aa).

The disordered stretch occupies residues alanine 312 to glycine 347. Residues glutamate 325 to glycine 338 are compositionally biased toward acidic residues.

The protein belongs to the universal ribosomal protein uL10 family. As to quaternary structure, part of the 50S ribosomal subunit. Forms part of the ribosomal stalk which helps the ribosome interact with GTP-bound translation factors. Forms a heptameric L10(L12)2(L12)2(L12)2 complex, where L10 forms an elongated spine to which the L12 dimers bind in a sequential fashion.

Its function is as follows. Forms part of the ribosomal stalk, playing a central role in the interaction of the ribosome with GTP-bound translation factors. The sequence is that of Large ribosomal subunit protein uL10 from Methanosarcina acetivorans (strain ATCC 35395 / DSM 2834 / JCM 12185 / C2A).